The following is a 499-amino-acid chain: U4/U6 small nuclear ribonucleoprotein Prp31 (499 aa).

The disordered stretch occupies residues 1–43 (MSLADELLADLEEAAEEEEGGSYGEEEEEPAIEDVQEETQLDL). Residues 7-40 (LLADLEEAAEEEEGGSYGEEEEEPAIEDVQEETQ) show a composition bias toward acidic residues. 2 coiled-coil regions span residues 85–120 (EAAPEYRVIVDANNLTVEIENELNIIHKFIRDKYSK) and 181–215 (DEELERLEEACDMALELNASKHRIYEYVESRMSFI). The 119-residue stretch at 215–333 (IAPNLSIIIG…IERKFDKWQE (119 aa)) folds into the Nop domain. The tract at residues 334–357 (PPPVKQVKPLPAPLDGQRKKRGGR) is disordered. Positions 351-364 (RKKRGGRRYRKMKE) match the Nuclear localization signal (NLS) motif. Ser379, Ser395, and Ser432 each carry phosphoserine. Position 438 is an N6-acetyllysine (Lys438). Phosphoserine is present on Ser439. At Thr440 the chain carries Phosphothreonine. Phosphoserine is present on Ser450. Thr455 carries the phosphothreonine modification. Residues Lys471 and Lys478 each participate in a glycyl lysine isopeptide (Lys-Gly) (interchain with G-Cter in SUMO2) cross-link.

This sequence belongs to the PRP31 family. As to quaternary structure, identified in the spliceosome B complex. Component of the U4/U6-U5 tri-snRNP complex composed of the U4, U6 and U5 snRNAs and at least PRPF3, PRPF4, PRPF6, PRPF8, PRPF31, SNRNP200, TXNL4A, SNRNP40, DDX23, CD2BP2, PPIH, SNU13, EFTUD2, SART1 and USP39. Interacts with a complex formed by SNU13 and U4 snRNA, but not with SNU13 or U4 snRNA alone. The complex formed by SNU13 and PRPF31 also binds U4atac snRNA, a characteristic component of specific, less abundant spliceosomal complexes. Interacts with PRPF6/U5 snRNP-associated 102 kDa protein. Component of some MLL1/MLL complex, at least composed of the core components KMT2A/MLL1, ASH2L, HCFC1/HCF1, WDR5 and RBBP5, as well as the facultative components BACC1, CHD8, E2F6, HSP70, INO80C, KANSL1, LAS1L, MAX, MCRS1, MGA, KAT8/MOF, PELP1, PHF20, PRP31, RING2, RUVB1/TIP49A, RUVB2/TIP49B, SENP3, TAF1, TAF4, TAF6, TAF7, TAF9 and TEX10. Interacts (via its NLS) with CTNNBL1. Interacts with USH1G. In terms of processing, phosphorylated by PRP4K during spliceosome assembly.

Its subcellular location is the nucleus. It localises to the nucleus speckle. The protein resides in the cajal body. Involved in pre-mRNA splicing as component of the spliceosome. Required for the assembly of the U4/U5/U6 tri-snRNP complex, one of the building blocks of the spliceosome. In Mus musculus (Mouse), this protein is U4/U6 small nuclear ribonucleoprotein Prp31 (Prpf31).